We begin with the raw amino-acid sequence, 70 residues long: Sec-independent protein translocase protein TatA (70 aa).

A helical membrane pass occupies residues 1–21; it reads MAIGVNQLLIILVIIVLLFGA.

This sequence belongs to the TatA/E family. In terms of assembly, the Tat system comprises two distinct complexes: a TatABC complex, containing multiple copies of TatA, TatB and TatC subunits, and a separate TatA complex, containing only TatA subunits. Substrates initially bind to the TatABC complex, which probably triggers association of the separate TatA complex to form the active translocon.

The protein resides in the cell inner membrane. Functionally, part of the twin-arginine translocation (Tat) system that transports large folded proteins containing a characteristic twin-arginine motif in their signal peptide across membranes. TatA could form the protein-conducting channel of the Tat system. The sequence is that of Sec-independent protein translocase protein TatA from Campylobacter curvus (strain 525.92).